A 629-amino-acid polypeptide reads, in one-letter code: DNA topoisomerase 4 subunit B (629 aa).

Residues Y4, N41, D68, 109–115 (GLHGVGI), and K333 contribute to the ATP site. Residues 411–524 (AELFLVEGDS…AGHVYVAMPP (114 aa)) form the Toprim domain. Mg(2+) contacts are provided by E417, D489, and D491.

It belongs to the type II topoisomerase family. ParE type 1 subfamily. Heterotetramer composed of ParC and ParE. Mg(2+) serves as cofactor. Requires Mn(2+) as cofactor. The cofactor is Ca(2+).

The enzyme catalyses ATP-dependent breakage, passage and rejoining of double-stranded DNA.. Functionally, topoisomerase IV is essential for chromosome segregation. It relaxes supercoiled DNA. Performs the decatenation events required during the replication of a circular DNA molecule. This chain is DNA topoisomerase 4 subunit B, found in Pseudomonas aeruginosa (strain ATCC 15692 / DSM 22644 / CIP 104116 / JCM 14847 / LMG 12228 / 1C / PRS 101 / PAO1).